A 295-amino-acid chain; its full sequence is Ethanolamine ammonia-lyase small subunit (295 aa).

3 residues coordinate adenosylcob(III)alamin: Val-207, Glu-228, and Cys-258.

It belongs to the EutC family. The basic unit is a heterodimer which dimerizes to form tetramers. The heterotetramers trimerize; 6 large subunits form a core ring with 6 small subunits projecting outwards. Requires adenosylcob(III)alamin as cofactor.

It localises to the bacterial microcompartment. The catalysed reaction is ethanolamine = acetaldehyde + NH4(+). It functions in the pathway amine and polyamine degradation; ethanolamine degradation. Its function is as follows. Catalyzes the deamination of various vicinal amino-alcohols to oxo compounds. Allows this organism to utilize ethanolamine as the sole source of nitrogen and carbon in the presence of external vitamin B12. This Shigella sonnei (strain Ss046) protein is Ethanolamine ammonia-lyase small subunit.